We begin with the raw amino-acid sequence, 284 residues long: Bifunctional protein FolD 1 (284 aa).

NADP(+) is bound by residues 166–168 (GAS) and isoleucine 232.

This sequence belongs to the tetrahydrofolate dehydrogenase/cyclohydrolase family. As to quaternary structure, homodimer.

It catalyses the reaction (6R)-5,10-methylene-5,6,7,8-tetrahydrofolate + NADP(+) = (6R)-5,10-methenyltetrahydrofolate + NADPH. The catalysed reaction is (6R)-5,10-methenyltetrahydrofolate + H2O = (6R)-10-formyltetrahydrofolate + H(+). Its pathway is one-carbon metabolism; tetrahydrofolate interconversion. Functionally, catalyzes the oxidation of 5,10-methylenetetrahydrofolate to 5,10-methenyltetrahydrofolate and then the hydrolysis of 5,10-methenyltetrahydrofolate to 10-formyltetrahydrofolate. This chain is Bifunctional protein FolD 1, found in Pseudomonas syringae pv. syringae (strain B728a).